A 205-amino-acid polypeptide reads, in one-letter code: Thiamine-phosphate synthase (205 aa).

4-amino-2-methyl-5-(diphosphooxymethyl)pyrimidine contacts are provided by residues 37 to 41 (QVREK) and Asn-69. 2 residues coordinate Mg(2+): Asp-70 and Asp-89. Ser-108 provides a ligand contact to 4-amino-2-methyl-5-(diphosphooxymethyl)pyrimidine. 134-136 (TGS) contacts 2-[(2R,5Z)-2-carboxy-4-methylthiazol-5(2H)-ylidene]ethyl phosphate. A 4-amino-2-methyl-5-(diphosphooxymethyl)pyrimidine-binding site is contributed by Lys-137. 2-[(2R,5Z)-2-carboxy-4-methylthiazol-5(2H)-ylidene]ethyl phosphate contacts are provided by residues Gly-165 and 185–186 (IS).

This sequence belongs to the thiamine-phosphate synthase family. Mg(2+) is required as a cofactor.

It carries out the reaction 2-[(2R,5Z)-2-carboxy-4-methylthiazol-5(2H)-ylidene]ethyl phosphate + 4-amino-2-methyl-5-(diphosphooxymethyl)pyrimidine + 2 H(+) = thiamine phosphate + CO2 + diphosphate. The enzyme catalyses 2-(2-carboxy-4-methylthiazol-5-yl)ethyl phosphate + 4-amino-2-methyl-5-(diphosphooxymethyl)pyrimidine + 2 H(+) = thiamine phosphate + CO2 + diphosphate. It catalyses the reaction 4-methyl-5-(2-phosphooxyethyl)-thiazole + 4-amino-2-methyl-5-(diphosphooxymethyl)pyrimidine + H(+) = thiamine phosphate + diphosphate. Its pathway is cofactor biosynthesis; thiamine diphosphate biosynthesis; thiamine phosphate from 4-amino-2-methyl-5-diphosphomethylpyrimidine and 4-methyl-5-(2-phosphoethyl)-thiazole: step 1/1. Condenses 4-methyl-5-(beta-hydroxyethyl)thiazole monophosphate (THZ-P) and 2-methyl-4-amino-5-hydroxymethyl pyrimidine pyrophosphate (HMP-PP) to form thiamine monophosphate (TMP). This chain is Thiamine-phosphate synthase, found in Clostridium botulinum (strain 657 / Type Ba4).